The sequence spans 525 residues: WD repeat-containing protein JIP5 (525 aa).

5 WD repeats span residues 28 to 69, 121 to 160, 211 to 251, 270 to 310, and 358 to 398; these read VFDE…RILN, RHKGSVRGMSFNNDGSKLYTIGIDNVLKKANSLTGKVMKK, HNGD…ESDA, QEDE…LVDQ, and RKHS…DDEE. The tract at residues 396–525 is disordered; it reads DEEGKINESY…EHGIRKFEGL (130 aa). Acidic residues predominate over residues 410-424; that stretch reads SDNDNGFDSDADSNS. Low complexity predominate over residues 425-435; it reads DSESVSSSDVD. A compositionally biased stretch (basic and acidic residues) spans 463–484; it reads SKDELLAELEKDLQSSDEDSKH. Residues 485 to 501 are compositionally biased toward basic residues; sequence YTKRTKSTQPKKLKKQK. Basic and acidic residues predominate over residues 513–525; the sequence is QKHEHGIRKFEGL.

Belongs to the WD repeat WDR55 family.

It localises to the nucleus. The protein resides in the nucleolus. The chain is WD repeat-containing protein JIP5 (JIP5) from Kluyveromyces lactis (strain ATCC 8585 / CBS 2359 / DSM 70799 / NBRC 1267 / NRRL Y-1140 / WM37) (Yeast).